The following is a 493-amino-acid chain: UDP-N-acetylmuramate--L-alanine ligase (493 aa).

126–132 (GTHGKTT) is an ATP binding site.

Belongs to the MurCDEF family.

It localises to the cytoplasm. The catalysed reaction is UDP-N-acetyl-alpha-D-muramate + L-alanine + ATP = UDP-N-acetyl-alpha-D-muramoyl-L-alanine + ADP + phosphate + H(+). It functions in the pathway cell wall biogenesis; peptidoglycan biosynthesis. In terms of biological role, cell wall formation. This chain is UDP-N-acetylmuramate--L-alanine ligase, found in Hamiltonella defensa subsp. Acyrthosiphon pisum (strain 5AT).